The following is a 162-amino-acid chain: Auracyanin-A (162 aa).

The signal sequence occupies residues methionine 1–alanine 22. Cysteine 23 carries N-palmitoyl cysteine lipidation. Residue cysteine 23 is the site of S-diacylglycerol cysteine attachment. The Plastocyanin-like domain maps to valine 42–asparagine 162. Cu cation is bound by residues histidine 81, cysteine 146, histidine 151, and methionine 155.

In terms of assembly, monomer. Requires Cu cation as cofactor.

Its subcellular location is the cell membrane. Functionally, probably a soluble electron acceptor for the integral membrane protein electron transfer alternative complex III (ACIII). The chain is Auracyanin-A from Chloroflexus aurantiacus (strain ATCC 29366 / DSM 635 / J-10-fl).